The chain runs to 218 residues: Pyridoxine/pyridoxamine 5'-phosphate oxidase (218 aa).

Substrate is bound by residues 14 to 17 and Lys72; that span reads RREY. FMN is bound by residues 67-72, 82-83, Arg88, Lys89, and Gln111; these read RIVLLK and YT. Substrate contacts are provided by Tyr129, Arg133, and Ser137. Residues 146 to 147 and Trp191 contribute to the FMN site; that span reads QS. 197–199 lines the substrate pocket; it reads RLH. Residue Arg201 coordinates FMN.

The protein belongs to the pyridoxamine 5'-phosphate oxidase family. In terms of assembly, homodimer. Requires FMN as cofactor.

It catalyses the reaction pyridoxamine 5'-phosphate + O2 + H2O = pyridoxal 5'-phosphate + H2O2 + NH4(+). The catalysed reaction is pyridoxine 5'-phosphate + O2 = pyridoxal 5'-phosphate + H2O2. It participates in cofactor metabolism; pyridoxal 5'-phosphate salvage; pyridoxal 5'-phosphate from pyridoxamine 5'-phosphate: step 1/1. The protein operates within cofactor metabolism; pyridoxal 5'-phosphate salvage; pyridoxal 5'-phosphate from pyridoxine 5'-phosphate: step 1/1. Its function is as follows. Catalyzes the oxidation of either pyridoxine 5'-phosphate (PNP) or pyridoxamine 5'-phosphate (PMP) into pyridoxal 5'-phosphate (PLP). This Escherichia coli O157:H7 protein is Pyridoxine/pyridoxamine 5'-phosphate oxidase.